A 121-amino-acid polypeptide reads, in one-letter code: Large ribosomal subunit protein uL22 (121 aa).

The protein belongs to the universal ribosomal protein uL22 family. As to quaternary structure, part of the 50S ribosomal subunit.

In terms of biological role, this protein binds specifically to 23S rRNA; its binding is stimulated by other ribosomal proteins, e.g. L4, L17, and L20. It is important during the early stages of 50S assembly. It makes multiple contacts with different domains of the 23S rRNA in the assembled 50S subunit and ribosome. Its function is as follows. The globular domain of the protein is located near the polypeptide exit tunnel on the outside of the subunit, while an extended beta-hairpin is found that lines the wall of the exit tunnel in the center of the 70S ribosome. This chain is Large ribosomal subunit protein uL22, found in Beutenbergia cavernae (strain ATCC BAA-8 / DSM 12333 / CCUG 43141 / JCM 11478 / NBRC 16432 / NCIMB 13614 / HKI 0122).